The chain runs to 463 residues: uncharacterized protein (463 aa).

Residues 1–93 (MSYMIAVPDM…AGAYASAEAT (93 aa)) enclose the PE domain. 2 disordered regions span residues 231 to 320 (GGAG…AGNG) and 408 to 463 (NGGD…TPGQ). The span at 408-451 (NGGDGGKGGDAQLIGNGGNGGNGGKGGTGLMPGINGTGGAGGSR) shows a compositional bias: gly residues.

The protein belongs to the mycobacterial PE family. PGRS subfamily.

This is an uncharacterized protein from Mycobacterium tuberculosis (strain ATCC 25618 / H37Rv).